The primary structure comprises 750 residues: Sulfhydryl oxidase 1 (750 aa).

The first 32 residues, 1–32 (MGRCNRGSGPPSSLLLLLLLLLWLLAVPGASA), serve as a signal peptide directing secretion. The 121-residue stretch at 39–159 (YSPSDPLTLL…RERLIDALES (121 aa)) folds into the Thioredoxin domain. Residues Cys73 and Cys76 each act as nucleophile in the active site. 2 cysteine pairs are disulfide-bonded: Cys73–Cys76 and Cys104–Cys113. N-linked (GlcNAc...) asparagine glycosylation is found at Asn133 and Asn246. Residues Cys396 and Cys408 are joined by a disulfide bond. The 108-residue stretch at 399-506 (SEPHFRGFPC…EDPQFPKVQW (108 aa)) folds into the ERV/ALR sulfhydryl oxidase domain. FAD is bound by residues Arg404, Trp411, and His415. Position 429 is a phosphoserine (Ser429). An intrachain disulfide couples Cys452 to Cys455. FAD-binding positions include Asp454, His458, 481 to 488 (WSSHNRVN), Lys503, and Trp506. A disulfide bridge connects residues Cys512 and Cys515. Asn578 carries an N-linked (GlcNAc...) asparagine glycan. The segment at 578–645 (NSTVDLGKPE…REQPRGQWHL (68 aa)) is disordered. Residues 624–639 (PPEHMAELQTNEREQP) are compositionally biased toward basic and acidic residues. A helical transmembrane segment spans residues 713–733 (ISLCVGLYSLSFMGLLAMYAY).

It belongs to the quiescin-sulfhydryl oxidase (QSOX) family. As to quaternary structure, monomer. Requires FAD as cofactor. Post-translationally, N-glycosylated. O-glycosylated on Thr and Ser residues.

It is found in the golgi apparatus membrane. Its subcellular location is the secreted. It catalyses the reaction 2 R'C(R)SH + O2 = R'C(R)S-S(R)CR' + H2O2. In terms of biological role, catalyzes the oxidation of sulfhydryl groups in peptide and protein thiols to disulfides with the reduction of oxygen to hydrogen peroxide. Plays a role in disulfide bond formation in a variety of extracellular proteins. In fibroblasts, required for normal incorporation of laminin into the extracellular matrix, and thereby for normal cell-cell adhesion and cell migration. In Pongo abelii (Sumatran orangutan), this protein is Sulfhydryl oxidase 1 (QSOX1).